The primary structure comprises 122 residues: Large ribosomal subunit protein uL14 (122 aa).

The protein belongs to the universal ribosomal protein uL14 family. Part of the 50S ribosomal subunit. Forms a cluster with proteins L3 and L19. In the 70S ribosome, L14 and L19 interact and together make contacts with the 16S rRNA in bridges B5 and B8.

Functionally, binds to 23S rRNA. Forms part of two intersubunit bridges in the 70S ribosome. The chain is Large ribosomal subunit protein uL14 from Gemmatimonas aurantiaca (strain DSM 14586 / JCM 11422 / NBRC 100505 / T-27).